Consider the following 258-residue polypeptide: uncharacterized protein (258 aa).

The signal sequence occupies residues 1 to 19; the sequence is MRKIFLPLLLVALSPVAHS.

This is an uncharacterized protein from Escherichia coli (strain K12).